A 451-amino-acid chain; its full sequence is Tubulin alpha-1B chain (451 aa).

The MREC motif motif lies at 1-4 (MREC). Positions 10, 11, 12, and 15 each coordinate GTP. Position 40 is an N6,N6,N6-trimethyllysine; alternate (lysine 40). Position 40 is an N6-acetyllysine; alternate (lysine 40). Serine 48 carries the phosphoserine modification. Residues glutamate 71, alanine 99, serine 140, glycine 143, glycine 144, threonine 145, glycine 146, threonine 179, glutamate 183, asparagine 206, tyrosine 224, and asparagine 228 each coordinate GTP. Glutamate 71 contributes to the Mg(2+) binding site. At serine 232 the chain carries Phosphoserine. Residue leucine 252 participates in GTP binding. Glutamate 254 is a catalytic residue. Position 282 is a 3'-nitrotyrosine (tyrosine 282). Residue lysine 326 forms a Glycyl lysine isopeptide (Lys-Gly) (interchain with G-Cter in ubiquitin) linkage. Position 339 is an omega-N-methylarginine (arginine 339). Residue lysine 370 forms a Glycyl lysine isopeptide (Lys-Gly) (interchain with G-Cter in ubiquitin) linkage. The residue at position 439 (serine 439) is a Phosphoserine. Residues glutamate 443 and glutamate 445 each carry the 5-glutamyl polyglutamate modification. Position 451 is a 3'-nitrotyrosine (tyrosine 451).

This sequence belongs to the tubulin family. As to quaternary structure, heterodimer of alpha- and beta-tubulin. A typical microtubule is a hollow water-filled tube with an outer diameter of 25 nm and an inner diameter of 15 nM. Alpha-beta heterodimers associate head-to-tail to form protofilaments running lengthwise along the microtubule wall with the beta-tubulin subunit facing the microtubule plus end conferring a structural polarity. Microtubules usually have 13 protofilaments but different protofilament numbers can be found in some organisms and specialized cells. Interacts with gamma-tubulin; the interaction allows microtubules to nucleate from the gamma-tubulin ring complex (gTuRC). Nascent microtubule interacts (via alpha-tubulin MREC motif) with TTC5/STRAP; this interaction may result in tubulin mRNA-targeted degradation. Component of sperm flagellar doublet microtubules. Mg(2+) serves as cofactor. Some glutamate residues at the C-terminus are polyglycylated, resulting in polyglycine chains on the gamma-carboxyl group. Glycylation is mainly limited to tubulin incorporated into axonemes (cilia and flagella) whereas glutamylation is prevalent in neuronal cells, centrioles, axonemes, and the mitotic spindle. Both modifications can coexist on the same protein on adjacent residues, and lowering polyglycylation levels increases polyglutamylation, and reciprocally. Cilia and flagella glycylation is required for their stability and maintenance. Flagella glycylation controls sperm motility. In terms of processing, some glutamate residues at the C-terminus are polyglutamylated, resulting in polyglutamate chains on the gamma-carboxyl group. Polyglutamylation plays a key role in microtubule severing by spastin (SPAST). SPAST preferentially recognizes and acts on microtubules decorated with short polyglutamate tails: severing activity by SPAST increases as the number of glutamates per tubulin rises from one to eight, but decreases beyond this glutamylation threshold. Glutamylation is also involved in cilia motility. Post-translationally, acetylation of alpha chains at Lys-40 is located inside the microtubule lumen. This modification has been correlated with increased microtubule stability, intracellular transport and ciliary assembly. Methylation of alpha chains at Lys-40 is found in mitotic microtubules and is required for normal mitosis and cytokinesis contributing to genomic stability. In terms of processing, nitration of Tyr-451 is irreversible and interferes with normal dynein intracellular distribution. Post-translationally, undergoes a tyrosination/detyrosination cycle, the cyclic removal and re-addition of a C-terminal tyrosine residue by the enzymes tubulin tyrosine carboxypeptidase (MATCAP1, VASH1 or VASH2) and tubulin tyrosine ligase (TTL), respectively. Tyrosination promotes microtubule interaction with CAP-Gly domain-containing proteins such as CLIP1, CLIP2 and DCTN1. Tyrosination regulates the initiation of dynein-dynactin motility via interaction with DCTN1, which brings the dynein-dynactin complex into contact with microtubules. In neurons, tyrosinated tubulins mediate the initiation of retrograde vesicle transport. In terms of processing, detyrosination is involved in metaphase plate congression by guiding chromosomes during mitosis: detyrosination promotes interaction with CENPE, promoting pole-proximal transport of chromosomes toward the equator. Detyrosination increases microtubules-dependent mechanotransduction in dystrophic cardiac and skeletal muscle. In cardiomyocytes, detyrosinated microtubules are required to resist to contractile compression during contraction: detyrosination promotes association with desmin (DES) at force-generating sarcomeres, leading to buckled microtubules and mechanical resistance to contraction.

The protein resides in the cytoplasm. It localises to the cytoskeleton. The catalysed reaction is GTP + H2O = GDP + phosphate + H(+). Functionally, tubulin is the major constituent of microtubules, protein filaments consisting of alpha- and beta-tubulin heterodimers. Microtubules grow by the addition of GTP-tubulin dimers to the microtubule end, where a stabilizing cap forms. Below the cap, tubulin dimers are in GDP-bound state, owing to GTPase activity of alpha-tubulin. The chain is Tubulin alpha-1B chain (TUBA1B) from Pan troglodytes (Chimpanzee).